The chain runs to 263 residues: uncharacterized protein (263 aa).

A signal peptide spans 1–22 (MEYLKRLALFISVIILTIFIMG). Residue cysteine 23 is the site of N-palmitoyl cysteine attachment. Cysteine 23 carries the S-diacylglycerol cysteine lipid modification.

Belongs to the staphylococcal tandem lipoprotein family.

The protein resides in the cell membrane. This is an uncharacterized protein from Staphylococcus aureus (strain MSSA476).